Here is a 150-residue protein sequence, read N- to C-terminus: Globin-1 (150 aa).

In terms of domain architecture, Globin spans 11–150 (PLSDAEKNKI…MICILLSSAY (140 aa)). Residues His74 and His106 each coordinate heme b.

It belongs to the globin family. As to quaternary structure, monomer.

This Mordacia mordax (Southern hemisphere lamprey) protein is Globin-1.